We begin with the raw amino-acid sequence, 87 residues long: MANTAQARKRARQSVERNKHNSSLRSMLRTAIKRVRQAIATGDKAVAGETLRKASSVIDRVADKNIIHKNKAARHKSRLAAAVKALA.

Positions 1–24 are disordered; it reads MANTAQARKRARQSVERNKHNSSL.

The protein belongs to the bacterial ribosomal protein bS20 family.

Binds directly to 16S ribosomal RNA. This is Small ribosomal subunit protein bS20 from Bordetella avium (strain 197N).